Here is a 199-residue protein sequence, read N- to C-terminus: dTTP/UTP pyrophosphatase (199 aa).

Aspartate 73 acts as the Proton acceptor in catalysis.

Belongs to the Maf family. YhdE subfamily. Requires a divalent metal cation as cofactor.

It is found in the cytoplasm. It carries out the reaction dTTP + H2O = dTMP + diphosphate + H(+). It catalyses the reaction UTP + H2O = UMP + diphosphate + H(+). In terms of biological role, nucleoside triphosphate pyrophosphatase that hydrolyzes dTTP and UTP. May have a dual role in cell division arrest and in preventing the incorporation of modified nucleotides into cellular nucleic acids. This Caldicellulosiruptor bescii (strain ATCC BAA-1888 / DSM 6725 / KCTC 15123 / Z-1320) (Anaerocellum thermophilum) protein is dTTP/UTP pyrophosphatase.